We begin with the raw amino-acid sequence, 378 residues long: uncharacterized protein (378 aa).

Over residues 1–11 the composition is skewed to polar residues; it reads MSQQTTPAEQK. Residues 1 to 33 form a disordered region; it reads MSQQTTPAEQKSLQRKKPPFRADQVGSLLRSEP.

This sequence to B.subtilis YxjH.

This is an uncharacterized protein from Bacillus subtilis (strain 168).